The sequence spans 614 residues: MSGYSSDRDRGRDRGFGAPRFGGSRAGPLSGKKFGNPGEKLVKKKWDLDEPPKFEKNFYQEHPDLARRTAQEVETYRRSKEITVRGHNCPKPVLNFYEANFPANVMDVIARQNFTEPTAIQAQGWPVALSGLDMVGVAQTGSGKTLSYLLPAIVHINHQPFLERGDGPICLVLAPTRELAQQVQQVAAEYCRACRLKSTCIYGGAPKGPQIRDLERGVEICIATPGRLIDFLECGKTNLRRTTYLVLDEADRMLDMGFEPQIRKIVDQIRPDRQTLMWSATWPKEVRQLAEDFLKDYIHINIGALELSANHNILQIVDVCHDVEKDEKLIRLMEEIMSEKENKTIVFVETKRRCDELTRKMRRDGWPAMGIHGDKSQQERDWVLNEFKHGKAPILIATDVASRGLDVEDVKFVINYDYPNSSEDYIHRIGRTARSTKTGTAYTFFTPNNIKQVSDLISVLREANQAINPKLLQLVEDRGSGRSRGRGGMKDDRRDRYSAGKRGGFNTFRDRENYDRGYSSLLKRDFGAKTQNGAYSAANYTNGSFGSNFVSAGIQTSFRTGNPTGTYQNGYDSTQQYGSNVPNMHNGMNQQAYAYPATAAAPMIGYPMPTGYSQ.

The segment covering 1 to 15 (MSGYSSDRDRGRDRG) has biased composition (basic and acidic residues). Residues 1-46 (MSGYSSDRDRGRDRGFGAPRFGGSRAGPLSGKKFGNPGEKLVKKKW) form a disordered region. Ser-24 carries the phosphoserine modification. An N6-acetyllysine; alternate modification is found at Lys-32. Lys-32 participates in a covalent cross-link: Glycyl lysine isopeptide (Lys-Gly) (interchain with G-Cter in SUMO2); alternate. 2 positions are modified to N6-acetyllysine: Lys-33 and Lys-40. Lys-45 participates in a covalent cross-link: Glycyl lysine isopeptide (Lys-Gly) (interchain with G-Cter in SUMO2). Residue Lys-53 forms a Glycyl lysine isopeptide (Lys-Gly) (interchain with G-Cter in SUMO2); alternate linkage. Lys-53 is covalently cross-linked (Glycyl lysine isopeptide (Lys-Gly) (interchain with G-Cter in SUMO); alternate). A Glycyl lysine isopeptide (Lys-Gly) (interchain with G-Cter in SUMO1); alternate cross-link involves residue Lys-53. Positions 94–122 (LNFYEANFPANVMDVIARQNFTEPTAIQA) match the Q motif motif. ATP is bound by residues 114 to 116 (FTE), Gln-121, and 138 to 145 (AQTGSGKT). The Helicase ATP-binding domain occupies 125-300 (WPVALSGLDM…EDFLKDYIHI (176 aa)). Lys-236 carries the post-translational modification N6-acetyllysine. The DEAD box motif lies at 248 to 251 (DEAD). A Phosphotyrosine modification is found at Tyr-297. A Helicase C-terminal domain is found at 328-475 (KLIRLMEEIM…AINPKLLQLV (148 aa)). Residues Lys-340, Lys-343, Lys-388, Lys-391, Lys-411, Lys-437, Lys-451, and Lys-470 each participate in a glycyl lysine isopeptide (Lys-Gly) (interchain with G-Cter in SUMO2) cross-link. A disordered region spans residues 477–504 (DRGSGRSRGRGGMKDDRRDRYSAGKRGG). A transactivation domain region spans residues 477–614 (DRGSGRSRGR…GYPMPTGYSQ (138 aa)). At Ser-480 the chain carries Phosphoserine. Residues 488–498 (GMKDDRRDRYS) are compositionally biased toward basic and acidic residues. Ser-520 carries the phosphoserine modification. Lys-523 is covalently cross-linked (Glycyl lysine isopeptide (Lys-Gly) (interchain with G-Cter in SUMO2)).

Belongs to the DEAD box helicase family. DDX5/DBP2 subfamily. As to quaternary structure, identified in the spliceosome C complex. Component of a ribonucleoprotein complex containing mRNAs and RNA-binding proteins including DDX5, HNRNPH2 and SRSF1 as well as splicing regulator ARVCF. Interacts with RBM4; the interaction occurs in an RNA-independent manner. Interacts with AGO1 and AGO2. Interacts with ESR1, AR, EP300, CREBBP, POLR2A, TP53, RUNX2 and HDAC1. Self-associates. Interacts with DDX17. Interacts with BRDT. The large PER complex involved in the repression of transcriptional termination is composed of at least PER2, CDK9, DDX5, DHX9, NCBP1 and POLR2A (active). Interacts with DHX36; this interaction occurs in a RNA-dependent manner. Interacts with NUPR1. Interacts with ERCC6. Interacts with DDX3X in the cytoplasm; this interaction may be more efficient when both proteins are unphosphorylated. In terms of processing, sumoylated; sumoylation, promoted by PIAS1, promotes interaction with HDAC1 and transcriptional repression activity. Sumoylation also significantly increases stability, and reduces polyubiquitination. Post-translationally, polyubiquitinated, leading to proteasomal degradation. Weakly phosphorylated in the G1/S phase of the cell cycle and much more at G2/M, especially at Thr and Tyr residues.

It is found in the nucleus. The protein localises to the nucleolus. It localises to the cytoplasm. The catalysed reaction is ATP + H2O = ADP + phosphate + H(+). Its function is as follows. Involved in the alternative regulation of pre-mRNA splicing; its RNA helicase activity is necessary for increasing tau exon 10 inclusion and occurs in a RBM4-dependent manner. Binds to the tau pre-mRNA in the stem-loop region downstream of exon 10. The rate of ATP hydrolysis is highly stimulated by single-stranded RNA. Involved in transcriptional regulation; the function is independent of the RNA helicase activity. Transcriptional coactivator for androgen receptor AR but probably not ESR1. Synergizes with DDX17 and SRA1 RNA to activate MYOD1 transcriptional activity and involved in skeletal muscle differentiation. Transcriptional coactivator for p53/TP53 and involved in p53/TP53 transcriptional response to DNA damage and p53/TP53-dependent apoptosis. Transcriptional coactivator for RUNX2 and involved in regulation of osteoblast differentiation. Acts as a transcriptional repressor in a promoter-specific manner; the function probably involves association with histone deacetylases, such as HDAC1. As component of a large PER complex is involved in the inhibition of 3' transcriptional termination of circadian target genes such as PER1 and NR1D1 and the control of the circadian rhythms. The chain is Probable ATP-dependent RNA helicase DDX5 (DDX5) from Pongo abelii (Sumatran orangutan).